The primary structure comprises 440 residues: Syntrophin-1 (440 aa).

2 consecutive PH domains span residues 2–208 (AAVR…ACTT) and 227–340 (QVRH…IGGY). The 84-residue stretch at 45–128 (TVRVVKYDGN…VVDLQVQYRR (84 aa)) folds into the PDZ domain. One can recognise an SU domain in the interval 384–440 (SFETIRATGDDGGRFLWVDFGPPHGEQELDLLNSAKPVVFILHSFLATKVYRLGLYA).

It belongs to the syntrophin family. Component of the dystrophin glycoprotein complex (DGC). Interacts with dyb-1, dys-1 and snf-6 to form the DGC. Expressed in neurons and muscles; particularly strong expression in the body wall, head and vulval muscles, and in ventral nerve cord (at protein level).

It is found in the membrane. The protein localises to the cytoplasm. The protein resides in the cytoskeleton. Its function is as follows. Adapter protein that binds to and probably organizes the subcellular localization of a variety of membrane proteins. May link various receptors to the actin cytoskeleton and the dystrophin glycoprotein complex (DGC). May also act by slowing calcium channel activity via a direct or indirect mechanism potentially involving other second messengers. Plays an early role in the formation of the neuromuscular junction and is necessary for muscle maintenance. The chain is Syntrophin-1 from Caenorhabditis elegans.